A 253-amino-acid polypeptide reads, in one-letter code: Sec-independent protein translocase protein TatC (253 aa).

Transmembrane regions (helical) follow at residues 19–39, 70–90, 109–129, 154–174, and 194–214; these read ILII…LATP, FAFT…LWAF, IAFF…FPFL, FLFQ…VVMF, and FFVL…SHLM.

Belongs to the TatC family. As to quaternary structure, forms a complex with TatA.

The protein localises to the cell membrane. In terms of biological role, part of the twin-arginine translocation (Tat) system that transports large folded proteins containing a characteristic twin-arginine motif in their signal peptide across membranes. The protein is Sec-independent protein translocase protein TatC of Halalkalibacterium halodurans (strain ATCC BAA-125 / DSM 18197 / FERM 7344 / JCM 9153 / C-125) (Bacillus halodurans).